A 355-amino-acid chain; its full sequence is S-adenosylmethionine:tRNA ribosyltransferase-isomerase (355 aa).

It belongs to the QueA family. In terms of assembly, monomer.

The protein resides in the cytoplasm. It carries out the reaction 7-aminomethyl-7-carbaguanosine(34) in tRNA + S-adenosyl-L-methionine = epoxyqueuosine(34) in tRNA + adenine + L-methionine + 2 H(+). The protein operates within tRNA modification; tRNA-queuosine biosynthesis. In terms of biological role, transfers and isomerizes the ribose moiety from AdoMet to the 7-aminomethyl group of 7-deazaguanine (preQ1-tRNA) to give epoxyqueuosine (oQ-tRNA). The chain is S-adenosylmethionine:tRNA ribosyltransferase-isomerase from Burkholderia ambifaria (strain ATCC BAA-244 / DSM 16087 / CCUG 44356 / LMG 19182 / AMMD) (Burkholderia cepacia (strain AMMD)).